A 180-amino-acid polypeptide reads, in one-letter code: Protein SPMIP9 (180 aa).

Microtubule inner protein component of sperm flagellar doublet microtubules. Testis-specific. Detected in the germ cell lineage at all stages.

Its subcellular location is the nucleus. The protein localises to the cytoplasm. The protein resides in the cytoskeleton. It localises to the flagellum axoneme. Functionally, microtubule inner protein (MIP) part of the dynein-decorated doublet microtubules (DMTs) in flagella axoneme. The sequence is that of Protein SPMIP9 from Homo sapiens (Human).